The sequence spans 121 residues: MARIAGVNIPNHQHTEIGLTAIFGIGRTRSRSICSAAGVEFSKKVKDLTDADLEKLREEVGKFIVEGDLRREVTMNIKRLMDLGCYRGVRHRKGLPMRGQRTRTNARTRKGPRRAAQALKK.

Residues 93-121 (KGLPMRGQRTRTNARTRKGPRRAAQALKK) form a disordered region.

This sequence belongs to the universal ribosomal protein uS13 family. Part of the 30S ribosomal subunit. Forms a loose heterodimer with protein S19. Forms two bridges to the 50S subunit in the 70S ribosome.

Located at the top of the head of the 30S subunit, it contacts several helices of the 16S rRNA. In the 70S ribosome it contacts the 23S rRNA (bridge B1a) and protein L5 of the 50S subunit (bridge B1b), connecting the 2 subunits; these bridges are implicated in subunit movement. Contacts the tRNAs in the A and P-sites. This Burkholderia ambifaria (strain ATCC BAA-244 / DSM 16087 / CCUG 44356 / LMG 19182 / AMMD) (Burkholderia cepacia (strain AMMD)) protein is Small ribosomal subunit protein uS13.